A 321-amino-acid chain; its full sequence is uncharacterized protein (321 aa).

The protein belongs to the NAD(P)-dependent epimerase/dehydratase family.

This is an uncharacterized protein from Staphylococcus aureus (strain bovine RF122 / ET3-1).